The sequence spans 409 residues: Pleckstrin homology domain-containing family O member 1 (409 aa).

The disordered stretch occupies residues 1 to 20; it reads MMKKNNSTKRGPQDGNHQCA. In terms of domain architecture, PH spans 21 to 132; the sequence is PPEKVGWVRK…WINALNSAIT (112 aa). Positions 133–193 are interaction with capping proteins (CPs); the sequence is RAKNRVLDEV…MLTLDLIQEE (61 aa). Residues 136–308 form an interaction with ATM, CKIP, IFP35 and NMI region; it reads NRVLDEVTVE…PHAPGQLSRI (173 aa). 3 disordered regions span residues 218–304, 325–350, and 390–409; these read LAGS…APGQ, EVQGLGDGKRKAKEPPRSPPDSESEQ, and TPDSHLRQTTQHSQYRKSLM. Residues S227 and S271 each carry the phosphoserine modification. The segment at 308-409 is negative regulator of AP-1 activity; it reads IQDLVARKLE…QHSQYRKSLM (102 aa). The segment covering 331–340 has biased composition (basic and acidic residues); sequence DGKRKAKEPP. Residue S342 is modified to Phosphoserine. The segment covering 390 to 402 has biased composition (polar residues); the sequence is TPDSHLRQTTQHS.

Heterodimer or homodimer. Interacts with CK2 and actin capping subunits (capping protein CP-alpha and CP-beta). CKIP1 and CK2 together inhibit the activity of actin capping protein at the barbed ends of actin filaments. Interacts with ATM, IFP35, JUN, JUND, NMI and PI3K. Interacts with AKT1, AKT2 and AKT3 (each isozyme of PKB), PtdIns(3,5)P2, PtdIns(4,5)P2 and PtdIns(3,4,5)P2. C-terminal fragments could be released during apoptosis via caspase-3-dependent cleavage.

Its subcellular location is the membrane. It is found in the nucleus. The protein resides in the cytoplasm. Its function is as follows. Plays a role in the regulation of the actin cytoskeleton through its interactions with actin capping protein (CP). May function to target CK2 to the plasma membrane thereby serving as an adapter to facilitate the phosphorylation of CP by protein kinase 2 (CK2). Appears to target ATM to the plasma membrane. Also implicated in PI3K-regulated muscle differentiation, the regulation of AP-1 activity (plasma membrane bound AP-1 regulator that translocates to the nucleus) and the promotion of apoptosis induced by tumor necrosis factor TNF. When bound to PKB, it inhibits it probably by decreasing PKB level of phosphorylation. This Bos taurus (Bovine) protein is Pleckstrin homology domain-containing family O member 1 (PLEKHO1).